The sequence spans 1246 residues: Respiratory nitrate reductase 2 alpha chain (1246 aa).

One can recognise a 4Fe-4S Mo/W bis-MGD-type domain in the interval 43–107; that stretch reads DKIVRSTHGV…SYSWYLYSAN (65 aa). 4 residues coordinate [4Fe-4S] cluster: His-50, Cys-54, Cys-58, and Cys-93. Mo-bis(molybdopterin guanine dinucleotide) is bound at residue Asp-223.

The protein belongs to the prokaryotic molybdopterin-containing oxidoreductase family. Tetramer composed of an alpha, a beta and 2 gamma chains. Alpha and beta are catalytic chains; gamma chain is involved in binding the enzyme complex to the cytoplasmic membrane. The cofactor is [4Fe-4S] cluster. Mo-bis(molybdopterin guanine dinucleotide) is required as a cofactor.

Its subcellular location is the cell membrane. It carries out the reaction nitrate + a quinol = a quinone + nitrite + H2O. Its function is as follows. This is a second nitrate reductase enzyme which can substitute for the NRA enzyme and allows E.coli to use nitrate as an electron acceptor during anaerobic growth. In terms of biological role, the alpha chain is the actual site of nitrate reduction. This Escherichia coli (strain K12) protein is Respiratory nitrate reductase 2 alpha chain (narZ).